We begin with the raw amino-acid sequence, 460 residues long: Nitrilase and fragile histidine triad fusion protein NitFhit (460 aa).

The region spanning 33-279 is the CN hydrolase domain; that stretch reads ATIAVGQMRS…LDIGTAEVDL (247 aa). Active-site residues include E72, K142, and C183. The region spanning 315–422 is the HIT domain; sequence DRPFATNIVD…MPRRLGDFGH (108 aa). The Histidine triad motif motif lies at 407 to 411; that stretch reads HVHFH. H409 serves as the catalytic Tele-AMP-histidine intermediate.

In the N-terminal section; belongs to the UPF0012 family. Homotetramer. Mn(2+) serves as cofactor.

It carries out the reaction P(1),P(3)-bis(5'-adenosyl) triphosphate + H2O = AMP + ADP + 2 H(+). Cleaves A-5'-PPP-5'A to yield AMP and ADP. In Drosophila melanogaster (Fruit fly), this protein is Nitrilase and fragile histidine triad fusion protein NitFhit.